A 327-amino-acid polypeptide reads, in one-letter code: Cell surface glycoprotein CD200 receptor 1 (327 aa).

The N-terminal stretch at 1–23 is a signal peptide; the sequence is MLCFWRTSHVAVLLIWGVFAAES. Topologically, residues 24–239 are extracellular; the sequence is SCPDKNQTMQ…GRGGDQLLGS (216 aa). Positions 26–145 constitute an Ig-like V-type domain; that stretch reads PDKNQTMQNN…GNFQNIYDLQ (120 aa). Residues asparagine 29, asparagine 34, asparagine 43, asparagine 96, asparagine 159, asparagine 187, asparagine 192, and asparagine 222 are each glycosylated (N-linked (GlcNAc...) asparagine). 2 disulfide bridges follow: cysteine 58–cysteine 129 and cysteine 81–cysteine 97. Positions 147 to 226 constitute an Ig-like C2-type domain; sequence LVPPEVTHFP…HLTTGNQSLS (80 aa). Intrachain disulfides connect cysteine 164–cysteine 213 and cysteine 183–cysteine 201. A helical membrane pass occupies residues 240-260; sequence YIQYIIPSIIILIIIGCICLL. Residues 261–327 lie on the Cytoplasmic side of the membrane; the sequence is KISGCRKCKL…DCLTLSAMGI (67 aa).

The protein belongs to the CD200R family. As to quaternary structure, CD200 and CD200R1 interact via their respective N-terminal Ig-like domains. In terms of processing, phosphorylated on tyrosine residues. Highly N-glycosylated. As to expression, restricted to cells of the myeloid lineage.

The protein resides in the cell membrane. Inhibitory receptor for the CD200/OX2 cell surface glycoprotein. Limits inflammation by inhibiting the expression of pro-inflammatory molecules including TNF-alpha, interferons, and inducible nitric oxide synthase (iNOS) in response to selected stimuli. In Rattus norvegicus (Rat), this protein is Cell surface glycoprotein CD200 receptor 1 (Cd200r1).